Here is an 85-residue protein sequence, read N- to C-terminus: uncharacterized protein (85 aa).

It belongs to the SF3B5 family.

This is an uncharacterized protein from Schizosaccharomyces pombe (strain 972 / ATCC 24843) (Fission yeast).